The chain runs to 95 residues: UPF0473 protein GWCH70_2487 (95 aa).

This sequence belongs to the UPF0473 family.

In Geobacillus sp. (strain WCH70), this protein is UPF0473 protein GWCH70_2487.